We begin with the raw amino-acid sequence, 607 residues long: Type 3 secretion system secretin (607 aa).

The N-terminal stretch at M1–A33 is a signal peptide. The segment at A277–P332 is disordered. Residues G291–P306 are compositionally biased toward low complexity.

Belongs to the bacterial secretin family. T3SS SctC subfamily. In terms of assembly, the core secretion machinery of the T3SS is composed of approximately 20 different proteins, including cytoplasmic components, a base, an export apparatus and a needle. This subunit is part of the base, which anchors the injectisome in the bacterial cell envelope. Forms a stable homooligomeric complex.

Its subcellular location is the cell outer membrane. Functionally, component of the type III secretion system (T3SS), also called injectisome, which is used to inject bacterial effector proteins into eukaryotic host cells. Forms a ring-shaped multimeric structure with an apparent central pore in the outer membrane. Necessary for both basic pathogenicity and the induction of the hypersensitive response in resistant plants. In Xanthomonas euvesicatoria, this protein is Type 3 secretion system secretin.